The sequence spans 399 residues: MTIRTLDDLLAEEVTGRRVLVRADLNVPLDKQTGQIADDGRIRAVLPTLSALVQAGAKVVVCSHLGRPKGSPNPVFSLRPVAGRLGELLGAPVHFAEDTVGDSARSTVADLADGQVALLENLRFNPGETSKDEAERGAFADQLAALADAYVDDAFGAVHRRHASVYDVPARLPHVAGRLVLREVEVLGTLAGEPDRPYVVVLGGSKVSDKLAVIEALLPKVDRLLVGGGMCFTFLKAQGHEVGSSLLEEEMVETCRSLLERADGKIMLPVDVVAADAFAPDAPHDTVRADGIPSKRVGLDIGPETVAGFAAALRGARTIFWNGPMGVFEMAAFAHGTRGVAEAIATSDAFTVVGGGDSAAAVRALGLDEQAFSHISTGGGASLEYLEGKTLPGIAALES.

Residues 24–26 (DLN), Arg41, 64–67 (HLGR), Arg123, and Arg160 contribute to the substrate site. ATP contacts are provided by residues Lys210, Gly298, Glu329, and 355-358 (GGDS).

This sequence belongs to the phosphoglycerate kinase family. Monomer.

The protein localises to the cytoplasm. It carries out the reaction (2R)-3-phosphoglycerate + ATP = (2R)-3-phospho-glyceroyl phosphate + ADP. It functions in the pathway carbohydrate degradation; glycolysis; pyruvate from D-glyceraldehyde 3-phosphate: step 2/5. In Salinispora tropica (strain ATCC BAA-916 / DSM 44818 / JCM 13857 / NBRC 105044 / CNB-440), this protein is Phosphoglycerate kinase.